Reading from the N-terminus, the 1319-residue chain is MSKERPKRNIIQKKYDDNDGMPWSEERVVRKVLYLSLKEFKSAQKRQLCDGIDDEGKGPNASLSNGQLNGSKGGHKEDGSRSQRKDGGGEYSVDGPAKKRPRLHAQRKFAQSQPNSPSNTPVKMADPSLPTPLTHITFLSRRKPKTEDFLTFICLRGSPALPSNMAYFGCSQDEEDLEDEDEIEEEKAPSVASTSCQSTPKKGKPHGKINGLVLNGHKVHKDKELTPRSKARESSVGRDRSERCDESEISHKHTAATAKSHNTNGHNYRRAAEELRKQVSKVNGLTRASSVGTHKASGKKQKDFRLPSKTVKYTATVSKGHVTYTKAKRELVKKAKLNHSKHGASAGLRAYSNNHHHNSHHATSNGHGRPQLSHSGKAQSINAKTRKQVLLSNGVHKMTNGSRLNGRLNGRHSAREEEVVDRPVRQGLRNSKRRSDAMTLLGAVTESEETKTKQQTTEVKKAKVQPSPLETRSKKALNQFKSPNIVTIAHSITEMAASPIQKTGPAPPPSPPAAPASPSMPQNPAIPEPARQRPKRASAGKLMFIRKAQQRAQTNPTLNRTTSTTSASKSFKPAEPTHTPPPRLDRDRERERERERSRARYAALGDVPIFKPSSREFQDPLVYLDSFREQVESCGLCRVLPPTDWRPECKLNDEMRFVTQVQRIHKLGRRWGPNVQKLACIKKHLKSQGISMDQPPVIGKSFKSSAFRSAFVCIGGCEVDLARFSELVCDLGGMQQVMDLKKWSRLADLLRIPKSAQDRLAKLQEAYLQFLLSYDLLSPEELQRLEQEVRAEKEALERKRGPLEGHSDNGHHSLALPRYEPKNGLNGLSHRNGFRNHHKEPDIQRQAGRRRLFAQEKKGEKVECEETEEEMEDEGVLSDQHKCIYKGRSVSLTTFYRIARNTMMMYFNKEPGAAEVEQDYWRIVEQRDCHVAVHYGKVDTNTHGSGFPVGKSEPFSKHGWNLTVLPNNSGSILRHLGAVPGVTIPWLNIGMVFSTSCWSQDQNRLPYIDYLHTGADCIWYSIPAEEKTKLDKVVHTLLQANGTPGLEMLEKNVMISPEVLCREGIKVHRTVQQSGQFVVVFPGAFVSRVCCGYSVSETVHFATPQWMNLGYEAAKDLKCRRIAKPFSMEKLLYQIATAEAKRENRLVLSTISSLLKDLRNIEMKQRQELYEAGLLSSARYCTHDHNQSPADTRKKPRKWLALESSERRCQMCQHLCYLSMVVQENENVVFCLECALHYVEKHKNCRGLKMMYRYDEEQINSLVNQVCGKALVRSGSEVCNGSSPIKPPAKRGPRKRESMKITLIPLPTHPSKSAAAAVS.

Over residues 1–11 (MSKERPKRNII) the composition is skewed to basic residues. 7 disordered regions span residues 1–23 (MSKE…GMPW), 50–130 (DGID…PSLP), 173–265 (DEED…NTNG), 351–382 (YSNN…QSIN), 396–478 (HKMT…KALN), 499–537 (PIQK…PKRA), and 549–599 (QQRA…RSRA). Residues 61–70 (ASLSNGQLNG) are compositionally biased toward polar residues. The span at 74 to 88 (GHKEDGSRSQRKDGG) shows a compositional bias: basic and acidic residues. The Nuclear localization signal motif lies at 96 to 102 (PAKKRPR). Basic residues predominate over residues 98 to 107 (KKRPRLHAQR). The segment covering 109–121 (FAQSQPNSPSNTP) has biased composition (polar residues). Over residues 173 to 185 (DEEDLEDEDEIEE) the composition is skewed to acidic residues. The segment covering 191-200 (VASTSCQSTP) has biased composition (polar residues). Positions 221–251 (KDKELTPRSKARESSVGRDRSERCDESEISH) are enriched in basic and acidic residues. Positions 372–382 (LSHSGKAQSIN) are enriched in polar residues. Residues 413 to 424 (SAREEEVVDRPV) show a composition bias toward basic and acidic residues. Residues 505-515 (PAPPPSPPAAP) are compositionally biased toward pro residues. Low complexity-rich tracts occupy residues 516 to 525 (ASPSMPQNPA) and 554 to 570 (TNPT…ASKS). Basic and acidic residues predominate over residues 583–598 (RLDRDRERERERERSR). A JmjN domain is found at 607–648 (VPIFKPSSREFQDPLVYLDSFREQVESCGLCRVLPPTDWRPE). Positions 671–779 (WGPNVQKLAC…FLLSYDLLSP (109 aa)) constitute an ARID domain. Basic and acidic residues predominate over residues 798 to 811 (RKRGPLEGHSDNGH). A disordered region spans residues 798–818 (RKRGPLEGHSDNGHHSLALPR). The GSGFP motif signature appears at 944–948 (GSGFP). Residues 954–1118 (PFSKHGWNLT…LGYEAAKDLK (165 aa)) form the JmjC domain.

The protein belongs to the JARID2 family. In terms of assembly, associates with the PRC2 complex.

The protein resides in the nucleus. Functionally, regulator of histone methyltransferase complexes that plays an essential role in embryonic development. Acts by modulating histone methyltransferase activity and promoting the recruitment of histone methyltransferase complexes to their target genes. Binds DNA and mediates the recruitment of the PRC2 complex to target genes in embryonic stem cells. Does not have histone demethylase activity but regulates activity of various histone methyltransferase complexes. In embryonic stem cells, it associates with the PRC2 complex and inhibits trimethylation of 'Lys-27' of histone H3 (H3K27me3) by the PRC2 complex, thereby playing a key role in differentiation of embryonic stem cells and normal development. This is Protein Jumonji (jarid2b) from Danio rerio (Zebrafish).